The chain runs to 319 residues: GTP 3',8-cyclase (319 aa).

In terms of domain architecture, Radical SAM core spans 4–227 (KHGRKINYLR…VETEKSSTAL (224 aa)). Residue R13 participates in GTP binding. [4Fe-4S] cluster-binding residues include C20 and C24. An S-adenosyl-L-methionine-binding site is contributed by Y26. [4Fe-4S] cluster is bound at residue C27. R63 lines the GTP pocket. G67 contributes to the S-adenosyl-L-methionine binding site. Residue T94 participates in GTP binding. S118 is an S-adenosyl-L-methionine binding site. K155 provides a ligand contact to GTP. M189 is a binding site for S-adenosyl-L-methionine. [4Fe-4S] cluster is bound by residues C249 and C252. A GTP-binding site is contributed by 254 to 256 (RVR). C266 contacts [4Fe-4S] cluster.

This sequence belongs to the radical SAM superfamily. MoaA family. In terms of assembly, monomer and homodimer. It depends on [4Fe-4S] cluster as a cofactor.

It carries out the reaction GTP + AH2 + S-adenosyl-L-methionine = (8S)-3',8-cyclo-7,8-dihydroguanosine 5'-triphosphate + 5'-deoxyadenosine + L-methionine + A + H(+). It participates in cofactor biosynthesis; molybdopterin biosynthesis. Catalyzes the cyclization of GTP to (8S)-3',8-cyclo-7,8-dihydroguanosine 5'-triphosphate. The polypeptide is GTP 3',8-cyclase (Clostridium botulinum (strain ATCC 19397 / Type A)).